A 513-amino-acid chain; its full sequence is Quiannulatic acid synthase (513 aa).

A helical transmembrane segment spans residues 14-34 (VFTFCNIILALASLVVAQCVY). N-linked (GlcNAc...) asparagine glycosylation is present at N308. C477 is a heme binding site.

This sequence belongs to the cytochrome P450 family. Requires heme as cofactor.

The protein localises to the membrane. The enzyme catalyses quiannulatene + 3 reduced [NADPH--hemoprotein reductase] + 3 O2 = quiannulatate + 3 oxidized [NADPH--hemoprotein reductase] + 4 H2O + 4 H(+). Its pathway is secondary metabolite biosynthesis; terpenoid biosynthesis. Cytochrome P450 monooxygenase; part of the gene cluster that mediates the biosynthesis of the pentacyclic sesterterpene quiannulatic acid. The first step of the pathway is performed by the sesterterpene synthase (QS) that possesses both prenyl transferase and terpene cyclase activity, converting isopentenyl diphosphate and dimethylallyl diphosphate into geranylfarnesyl diphosphate (GFPP) and further converting GFPP into quiannulatene via an unprecedented cyclization mode which involves three rounds of hydride shifts and two successive C-C bond migrations to construct the 5-6-5-5-5 fused ring. The cytochrome P450 monooxygenase Qnn-P450 then oxidizes quiannulatene at C-19 in 3 successive reactions to afford quiannulatic acid. The chain is Quiannulatic acid synthase from Emericella variicolor (Aspergillus stellatus).